The primary structure comprises 312 residues: Ribosomal RNA small subunit methyltransferase H (312 aa).

S-adenosyl-L-methionine is bound by residues 33–35 (GGY), aspartate 51, phenylalanine 78, aspartate 97, and glutamine 104.

This sequence belongs to the methyltransferase superfamily. RsmH family.

The protein resides in the cytoplasm. It carries out the reaction cytidine(1402) in 16S rRNA + S-adenosyl-L-methionine = N(4)-methylcytidine(1402) in 16S rRNA + S-adenosyl-L-homocysteine + H(+). In terms of biological role, specifically methylates the N4 position of cytidine in position 1402 (C1402) of 16S rRNA. This chain is Ribosomal RNA small subunit methyltransferase H, found in Orientia tsutsugamushi (strain Ikeda) (Rickettsia tsutsugamushi).